We begin with the raw amino-acid sequence, 382 residues long: Sialidase (382 aa).

R37 contributes to the substrate binding site. The Proton acceptor role is filled by D62. BNR repeat units follow at residues 71 to 82, 140 to 151, and 208 to 219; these read ARSTDFGKTWSY, IYSDDNGLTWSN, and IYSKDNGETWTM. R245 is a substrate binding site. A BNR 4 repeat occupies 255–266; it reads YISHDLGTTWEI. The active-site Nucleophile is the Y347.

This sequence belongs to the glycosyl hydrolase 33 family.

It localises to the secreted. It catalyses the reaction Hydrolysis of alpha-(2-&gt;3)-, alpha-(2-&gt;6)-, alpha-(2-&gt;8)- glycosidic linkages of terminal sialic acid residues in oligosaccharides, glycoproteins, glycolipids, colominic acid and synthetic substrates.. Its function is as follows. Sialidases have been suggested to be pathogenic factors in microbial infections. The chain is Sialidase (nanH) from Clostridium perfringens.